A 692-amino-acid polypeptide reads, in one-letter code: MYSQHGAPMAPPQKPETFMLSNEAQQSLPHDAQVALQQVDNLKYFLLSAPVDWQPDQLIRRFLLPTGDYISCVLWSNLFHISGTDIVRCLAFRFQAFGRPVKNSKKFEEGIFSDLRNLKAGTDATLEEPKSPFLDFLYKNNCIRTQKKQKVFYWYSVPHDRLFLDALERDLKREKMGQEATTVAVSEPALSFEFDSSQSLYEQLTKAQQANSSSFAAHASTTYGQSASPVVRTVDAMPPPQMAPQMAPPSIPLLTDESANSQMYTSIPMPNPIPQNLIKREADYGAIQYDRNGMPIARIHQRHSSMPTFVEYSPAPSFVSSQYEDYSNRGLSFEPVTPPQHSSHIGPEPAYIANEDTGLYTAIPEMSTGSGFNPMMHLPPSNLASAHFPTPARTFHSNVYSVLEGSPTYKQRRRRSSIPPGAANPVTTGTHSPAPALSYAAHKPSDLRRSVSSSVAPGDTDDSRHESLHRSVNSTYTATLPQKNLMHEMSRNGTPLSSVGEHREQSSIPLTQAEDLPALPANGTVESGAPNGVGHKSDRYATGPVRRARSATMMELGPYPQKSHSCPIPSCGRLFKRLEHLKRHVRTHTQERPYPCPYCNKAFSRSDNLAQHRRIHEAQQDGQPLVHEDDLENDDNESVSHDEDESPSESVHPAVPGVHGMTSMPSSVALQSTMGSMMGSHMIAPQLLQQQI.

The DNA-binding element occupies 56-165 (DQLIRRFLLP…SVPHDRLFLD (110 aa)). 2 disordered regions span residues 406–507 (SPTY…EQSS) and 519–540 (LPAN…SDRY). A compositionally biased stretch (polar residues) spans 470-482 (RSVNSTYTATLPQ). 2 C2H2-type zinc fingers span residues 564–588 (HSCP…VRTH) and 594–616 (YPCP…RRIH). Residues 618-665 (AQQDGQPLVHEDDLENDDNESVSHDEDESPSESVHPAVPGVHGMTSMP) are disordered. A compositionally biased stretch (acidic residues) spans 629–647 (DDLENDDNESVSHDEDESP).

The protein belongs to the STE12 transcription factor family.

Its subcellular location is the nucleus. Its function is as follows. Transcription factor involved in sexual reproduction. Required for cleistothecial development and ascosporogenesis. Not required for asexual reproduction (conidiation). May act to repress medA expression. The chain is Transcription factor steA (steA) from Emericella nidulans (strain FGSC A4 / ATCC 38163 / CBS 112.46 / NRRL 194 / M139) (Aspergillus nidulans).